Reading from the N-terminus, the 246-residue chain is UPF0309 protein ABC0887 (246 aa).

The SIS domain occupies Met33 to Glu212.

The protein belongs to the UPF0309 family.

This is UPF0309 protein ABC0887 from Shouchella clausii (strain KSM-K16) (Alkalihalobacillus clausii).